Here is a 334-residue protein sequence, read N- to C-terminus: Probable 2-ketogluconate reductase (334 aa).

NAD(+)-binding positions include 164–165 (RI), 244–246 (AGR), and Asp-270. Arg-246 is a catalytic residue. Glu-275 is an active-site residue. The active-site Proton donor is the His-294. 294-297 (HIGT) provides a ligand contact to NAD(+).

It belongs to the D-isomer specific 2-hydroxyacid dehydrogenase family.

The protein localises to the cytoplasm. The catalysed reaction is D-gluconate + NADP(+) = 2-dehydro-D-gluconate + NADPH + H(+). In terms of biological role, catalyzes the NADPH-dependent reduction of 2,5-diketo-D-gluconate (25DKG) to 5-keto-D-gluconate (5KDG), 2-keto-D-gluconate (2KDG) to D-gluconate, and 2-keto-L-gulonate (2KLG) to L-idonate (IA). The protein is Probable 2-ketogluconate reductase (tkrA) of Dictyostelium discoideum (Social amoeba).